The following is a 341-amino-acid chain: Ectoine-binding periplasmic protein TeaA (341 aa).

The first 25 residues, 1 to 25, serve as a signal peptide directing secretion; it reads MKAYKLLTTASIGALMLGMSTAAYS. L-ectoine contacts are provided by Glu-34, Arg-169, Asn-209, Trp-213, and Phe-234.

The protein belongs to the bacterial solute-binding protein 7 family. In terms of assembly, monomer. The complex comprises the extracytoplasmic solute receptor protein TeaA, and the two transmembrane proteins TeaB and TeaC.

It is found in the periplasm. Part of the tripartite ATP-independent periplasmic (TRAP) transport system TeaABC involved in the uptake of ectoine and hydroxyectoine in response to osmotic upshock. Probably functions as a recovery system for synthesized ectoine that leaks out of the cell. Binds ectoine with high affinity. Affinity for hydroxyectoine is approximately 20-fold lower. The chain is Ectoine-binding periplasmic protein TeaA (teaA) from Halomonas elongata (strain ATCC 33173 / DSM 2581 / NBRC 15536 / NCIMB 2198 / 1H9).